The primary structure comprises 180 residues: Cytokinin-beta-glucosidase 2 (180 aa).

In terms of biological role, hydrolyzes cytokinin glucosides thus liberating free cytokinins. The sequence is that of Cytokinin-beta-glucosidase 2 (ROLC2) from Linaria vulgaris (Toadflax).